Reading from the N-terminus, the 126-residue chain is S-adenosylmethionine decarboxylase proenzyme (126 aa).

S63 functions as the Schiff-base intermediate with substrate; via pyruvic acid in the catalytic mechanism. The residue at position 63 (S63) is a Pyruvic acid (Ser); by autocatalysis. H68 (proton acceptor; for processing activity) is an active-site residue. The active-site Proton donor; for catalytic activity is C83.

Belongs to the prokaryotic AdoMetDC family. Type 1 subfamily. Heterotetramer of two alpha and two beta chains arranged as a dimer of alpha/beta heterodimers. Pyruvate is required as a cofactor. Is synthesized initially as an inactive proenzyme. Formation of the active enzyme involves a self-maturation process in which the active site pyruvoyl group is generated from an internal serine residue via an autocatalytic post-translational modification. Two non-identical subunits are generated from the proenzyme in this reaction, and the pyruvate is formed at the N-terminus of the alpha chain, which is derived from the carboxyl end of the proenzyme. The post-translation cleavage follows an unusual pathway, termed non-hydrolytic serinolysis, in which the side chain hydroxyl group of the serine supplies its oxygen atom to form the C-terminus of the beta chain, while the remainder of the serine residue undergoes an oxidative deamination to produce ammonia and the pyruvoyl group blocking the N-terminus of the alpha chain.

It catalyses the reaction S-adenosyl-L-methionine + H(+) = S-adenosyl 3-(methylsulfanyl)propylamine + CO2. It functions in the pathway amine and polyamine biosynthesis; S-adenosylmethioninamine biosynthesis; S-adenosylmethioninamine from S-adenosyl-L-methionine: step 1/1. In terms of biological role, catalyzes the decarboxylation of S-adenosylmethionine to S-adenosylmethioninamine (dcAdoMet), the propylamine donor required for the synthesis of the polyamines spermine and spermidine from the diamine putrescine. This Bacillus velezensis (strain DSM 23117 / BGSC 10A6 / LMG 26770 / FZB42) (Bacillus amyloliquefaciens subsp. plantarum) protein is S-adenosylmethionine decarboxylase proenzyme.